The sequence spans 474 residues: MTSPTVSDAASAPIRTVPIAAIATAPGRGGIGVVRVSGPDVRAVMQAVCGRLLPPRQATYLPFLDADGAAIDRGIALWFPAPHSYTGEDVLELQGHGGPVVMQLLLSRCLRAGHGIGLRVAEPGEFTRRAFLNDKLDLAQAEAVADLIEASTEAAARSAARSLDGVFSQTVHALVERVIHLRMLVEATLDFPEEEIDFLEAADARGQLADIRARLDGVLAQARQGALLREGLHVVLAGQPNVGKSSLLNALAGAELAIVTPIAGTTRDKVQQTIQIEGIPLNIVDTAGLRDTEDEVERIGIERTWAAIARADVVLHLLDAADYRAHGLSAEDAAIDARIAEHVPPGVPTLRVINKIDLAGAAVPGRVDAQPPEVWLSARDGSGIELLRAALLEIAGWQGGGEGLYLARERHLSALRSAREHLTIAADHADQRAQSLDLFAEELRLAQEALNSITGAFSSDDLLGVIFSRFCIGK.

(6S)-5-formyl-5,6,7,8-tetrahydrofolate-binding residues include arginine 35, glutamate 92, and lysine 135. Positions 231-396 (GLHVVLAGQP…LRAALLEIAG (166 aa)) constitute a TrmE-type G domain. Residue asparagine 241 coordinates K(+). GTP-binding positions include 241–246 (NVGKSS), 260–266 (TPIAGTT), 285–288 (DTAG), and 377–379 (SAR). Mg(2+) is bound at residue serine 245. The K(+) site is built by threonine 260, isoleucine 262, and threonine 265. Threonine 266 contributes to the Mg(2+) binding site. Residue lysine 474 participates in (6S)-5-formyl-5,6,7,8-tetrahydrofolate binding.

The protein belongs to the TRAFAC class TrmE-Era-EngA-EngB-Septin-like GTPase superfamily. TrmE GTPase family. In terms of assembly, homodimer. Heterotetramer of two MnmE and two MnmG subunits. It depends on K(+) as a cofactor.

It is found in the cytoplasm. Exhibits a very high intrinsic GTPase hydrolysis rate. Involved in the addition of a carboxymethylaminomethyl (cmnm) group at the wobble position (U34) of certain tRNAs, forming tRNA-cmnm(5)s(2)U34. The protein is tRNA modification GTPase MnmE of Ralstonia nicotianae (strain ATCC BAA-1114 / GMI1000) (Ralstonia solanacearum).